Here is a 98-residue protein sequence, read N- to C-terminus: Large ribosomal subunit protein uL23 (98 aa).

Belongs to the universal ribosomal protein uL23 family. In terms of assembly, part of the 50S ribosomal subunit. Contacts protein L29, and trigger factor when it is bound to the ribosome.

Its function is as follows. One of the early assembly proteins it binds 23S rRNA. One of the proteins that surrounds the polypeptide exit tunnel on the outside of the ribosome. Forms the main docking site for trigger factor binding to the ribosome. The polypeptide is Large ribosomal subunit protein uL23 (Herpetosiphon aurantiacus (strain ATCC 23779 / DSM 785 / 114-95)).